We begin with the raw amino-acid sequence, 1427 residues long: Protein NPAT (1427 aa).

An interaction with MIZF region spans residues 1–318; it reads MLLPSDVARL…EEAIQDILEQ (318 aa). One can recognise a LisH domain in the interval 3–35; sequence LPSDVARLVLGYLQQENLISTCQTFILESSDLK. Required for activation of histone gene transcription and interaction with MIZF regions lie at residues 5-25 and 121-145; these read SDVA…STCQ and KRQR…YLSG. The interval 199–231 is disordered; it reads KKAHASLMSPGRRKSESQRKSTTLSGPHSTIRN. Serine 207 carries the post-translational modification Phosphoserine. Residues 218-231 show a composition bias toward polar residues; that stretch reads KSTTLSGPHSTIRN. The interval 262–338 is mediates transcriptional activation; sequence KLAENINKFL…FDLFDYGKTK (77 aa). Residues serine 554 and serine 599 each carry the phosphoserine modification. The span at 628–644 shows a compositional bias: polar residues; it reads SLSSTKQPSNDSASVEL. Disordered stretches follow at residues 628–669 and 683–732; these read SLSS…VKEE and EKVA…SAEI. The segment at 629-653 is required for acceleration of G1 phase; the sequence is LSSTKQPSNDSASVELNHTENEAQA. Low complexity predominate over residues 654–665; the sequence is SKSENSQEPSSS. Polar residues predominate over residues 695–711; it reads VENSHSLPPESVCSSVG. Phosphoserine; by CDK2 occurs at positions 775 and 779. Required for acceleration of G1 phase stretches follow at residues 828–853 and 1039–1054; these read QNED…IQLM and KSEE…SIVP. Disordered stretches follow at residues 1095–1121 and 1133–1152; these read FPNL…EKEK and SAIS…KVSP. The segment covering 1097 to 1114 has biased composition (polar residues); sequence NLDSPNVSSTLKPPSNNA. Position 1100 is a phosphoserine; by CDK2 (serine 1100). Glycyl lysine isopeptide (Lys-Gly) (interchain with G-Cter in SUMO2) cross-links involve residues lysine 1116 and lysine 1149. Residues 1140-1151 show a composition bias toward basic and acidic residues; that stretch reads TIRETQSEKKVS. Phosphoserine is present on residues serine 1151 and serine 1200. N6-acetyllysine is present on lysine 1228. Positions 1228-1252 are required for acceleration of G1 phase; it reads KDLKQEQTKSASSLITTEMLQDIQR. 2 disordered regions span residues 1253–1327 and 1348–1413; these read HSSV…SENS and SATP…FPAG. Position 1254 is a phosphoserine (serine 1254). Position 1270 is a phosphothreonine; by CDK2 (threonine 1270). The segment covering 1276-1285 has biased composition (basic and acidic residues); the sequence is GEKHKEEPID. Lysine 1280 participates in a covalent cross-link: Glycyl lysine isopeptide (Lys-Gly) (interchain with G-Cter in SUMO2). A required for acceleration of G1 phase region spans residues 1325–1349; the sequence is ENSVNMAAHTLMILSRAAISRTTSA. Polar residues predominate over residues 1348–1365; the sequence is SATPLKDNTQQFRASSRS. Threonine 1350 is modified (phosphothreonine; by CDK2). Residues 1371–1382 are compositionally biased toward basic and acidic residues; sequence KIEELDERERNS. Polar residues predominate over residues 1383–1394; sequence RPSSKNLTNSSI. Residues 1396 to 1406 are compositionally biased toward basic residues; sequence MKKKKIKKKKL.

The protein belongs to the NPAT family. Interacts with the cylin/CDK complexes CCNE1/CDK2 and CCNA1/CDK2. Interacts with BZW1, CASP8AP2, CREBBP, MIZF and YY1. Interacts with the RUVBL1, RUVBL2 and TRRAP subunits of the NuA4 complex. May also interact with GAPDH, NME1, NME2 and STIP1. Phosphorylated at Ser-775, Ser-779, Ser-1100, Thr-1270 and Thr-1350 by CCNE1/CDK2 at G1-S transition and until prophase, which promotes association with histone gene clusters and stimulates activation of histone transcription. Also phosphorylated by CCNA1/CDK2 in vitro. Ubiquitously expressed.

The protein localises to the nucleus. It localises to the cajal body. Required for progression through the G1 and S phases of the cell cycle and for S phase entry. Activates transcription of the histone H2A, histone H2B, histone H3 and histone H4 genes in conjunction with MIZF. Also positively regulates the ATM, MIZF and PRKDC promoters. Transcriptional activation may be accomplished at least in part by the recruitment of the NuA4 histone acetyltransferase (HAT) complex to target gene promoters. The sequence is that of Protein NPAT (NPAT) from Homo sapiens (Human).